Reading from the N-terminus, the 221-residue chain is Thyrotroph embryonic factor (221 aa).

A disordered region spans residues 72 to 116; sequence ESASSSTASPPSSSTAVFQPSETVSSTESSLEKERETPSPIDPNC. Positions 73-100 are enriched in low complexity; that stretch reads SASSSTASPPSSSTAVFQPSETVSSTES. A bZIP domain is found at 173 to 221; that stretch reads DEKYWTRRKKNNVAAKRSRDARRLKENQITIRAAFLEKENTALRTEVAD. The basic motif stretch occupies residues 175–195; sequence KYWTRRKKNNVAAKRSRDARR. The interval 196 to 203 is leucine-zipper; that stretch reads LKENQITI.

Belongs to the bZIP family. PAR subfamily. As to quaternary structure, binds DNA as a homodimer or a heterodimer. Can form a heterodimer with DBP.

The protein localises to the nucleus. Transcription factor that binds to and transactivates the TSHB promoter. Binds to a minimal DNA-binding sequence 5'-[TC][AG][AG]TTA[TC][AG]-3'. In Phodopus sungorus (Striped hairy-footed hamster), this protein is Thyrotroph embryonic factor (TEF).